A 340-amino-acid chain; its full sequence is NADH-quinone oxidoreductase subunit H (340 aa).

8 helical membrane passes run Thr-4–Ile-24, Tyr-78–Ile-98, Val-113–Ala-133, Val-151–Met-171, Met-184–Ile-204, Ser-244–Phe-264, Ile-273–Val-293, and Val-316–Val-336.

The protein belongs to the complex I subunit 1 family. NDH-1 is composed of 14 different subunits. Subunits NuoA, H, J, K, L, M, N constitute the membrane sector of the complex.

The protein resides in the cell inner membrane. The catalysed reaction is a quinone + NADH + 5 H(+)(in) = a quinol + NAD(+) + 4 H(+)(out). NDH-1 shuttles electrons from NADH, via FMN and iron-sulfur (Fe-S) centers, to quinones in the respiratory chain. The immediate electron acceptor for the enzyme in this species is believed to be ubiquinone. Couples the redox reaction to proton translocation (for every two electrons transferred, four hydrogen ions are translocated across the cytoplasmic membrane), and thus conserves the redox energy in a proton gradient. This subunit may bind ubiquinone. The sequence is that of NADH-quinone oxidoreductase subunit H from Legionella pneumophila (strain Lens).